The following is a 426-amino-acid chain: Endothelin-1 receptor (426 aa).

The first 20 residues, 1 to 20 (METFCLKVTFWVALVGYVIG), serve as a signal peptide directing secretion. At 21 to 79 (DHPESYSTNLSTPVDFTTFHGTELSFLVTTHRPTNLALPSNGSMHSYCPQQTKITSAFK) the chain is on the extracellular side. N29 and N61 each carry an N-linked (GlcNAc...) asparagine glycan. A helical transmembrane segment spans residues 80–101 (YINTVISCTIFIVGMVGNATLL). Topologically, residues 102–111 (RIIYQNKCMR) are cytoplasmic. The chain crosses the membrane as a helical span at residues 112–131 (NGPNALIASLALGDLIYVVI). Topologically, residues 132–158 (DLPINVFKLLAGRWPFDHNDFGVFLCK) are extracellular. C157 and C238 are joined by a disulfide. The chain crosses the membrane as a helical span at residues 159-180 (LFPFLQKSSVGITVLNLCALSV). The Cytoplasmic portion of the chain corresponds to 181–204 (DRYRAVASWSRVQGIGIPLITAIE). The chain crosses the membrane as a helical span at residues 205-228 (IVSIWILSFILAIPEAIGFVMVPF). Topologically, residues 229–255 (EYKGEQHKTCMLNATSKFMEFYQDVKD) are extracellular. Residue N241 is glycosylated (N-linked (GlcNAc...) asparagine). Residues 256–277 (WWLFGFYFCMPLVCTAIFYTLM) traverse the membrane as a helical segment. Over 278-305 (TCEMLNRRNGSLRIALSEHLKQRREVAK) the chain is Cytoplasmic. A helical membrane pass occupies residues 306–327 (TVFCLVVIFALCWFPLHLSRIL). Residues 328–346 (KKTVYDEMDKNRCELLSFL) are Extracellular-facing. The helical transmembrane segment at 347–371 (RLMDYIGINLATMNSCINPIALYFV) threads the bilayer. The Cytoplasmic portion of the chain corresponds to 372–426 (SKKFKNCFQSCLCCCCYQSKSLMTSVPMNGTSIQWKNHEQNNHNTERSSHKDSIN). A Phosphoserine modification is found at S424.

It belongs to the G-protein coupled receptor 1 family. Endothelin receptor subfamily. EDNRA sub-subfamily. As to quaternary structure, interacts with HDAC7 and KAT5.

The protein localises to the cell membrane. Functionally, receptor for endothelin-1. Mediates its action by association with G proteins that activate a phosphatidylinositol-calcium second messenger system. The rank order of binding affinities for ET-A is: ET1 &gt; ET2 &gt;&gt; ET3. This Canis lupus familiaris (Dog) protein is Endothelin-1 receptor.